Here is a 382-residue protein sequence, read N- to C-terminus: GTPase Obg (382 aa).

An Obg domain is found at 2-161; the sequence is VKFADESKIR…REIIVELNII (160 aa). The OBG-type G domain occupies 162–328; sequence ADIGLVGFPN…VKKAFIRLAD (167 aa). Residues 168 to 175, 193 to 197, 215 to 218, 282 to 285, and 309 to 311 each bind GTP; these read GFPNAGKS, FTTKI, DIPG, TKLD, and SLY. Serine 175 and threonine 195 together coordinate Mg(2+). The tract at residues 360–382 is disordered; sequence EEKNDDEHFGATVSLSRKRKPKK.

This sequence belongs to the TRAFAC class OBG-HflX-like GTPase superfamily. OBG GTPase family. In terms of assembly, monomer. It depends on Mg(2+) as a cofactor.

The protein resides in the cytoplasm. In terms of biological role, an essential GTPase which binds GTP, GDP and possibly (p)ppGpp with moderate affinity, with high nucleotide exchange rates and a fairly low GTP hydrolysis rate. Plays a role in control of the cell cycle, stress response, ribosome biogenesis and in those bacteria that undergo differentiation, in morphogenesis control. The polypeptide is GTPase Obg (Treponema denticola (strain ATCC 35405 / DSM 14222 / CIP 103919 / JCM 8153 / KCTC 15104)).